Reading from the N-terminus, the 416-residue chain is MAAEIICVGTELLLGEILNSNSQYLAQELARLGIPHYFQTVVGDNPERIKRAIAIARERAQILIFTGGLGPTPDDLTTETIADFFRTPLQENIAVIADIEAKFAQTGRPMAANNRKQALLPLGAELLANATGTAPGMIWHPQPDLLILTFPGVPSEMRQMWQGVAVPYLQSQGWGKTTIYSRVLRFQGIGESALAEKVTDFFTLTNPTVAPYAGKGEVRLRISCPASSEALAKEIIDPIAEEIKAIAGLDYFGQDEDTIASVVGALLRERGETVAVAESCTGGGLGALLTDQPGSSDYFWGGVIAYYNQVKIKLLGVDPEIIEYCGAVSEATAEAMALGVKERLGTDWGIAITGIAGPGGGTEEKPIGTVYVGLADPHGQASHILLQFGDRRGREWIRYLSACQALDHLRRRLQSS.

It belongs to the CinA family.

This is CinA-like protein from Synechocystis sp. (strain ATCC 27184 / PCC 6803 / Kazusa).